A 410-amino-acid polypeptide reads, in one-letter code: Regulator of microtubule dynamics protein 2 (410 aa).

Residues Ile-10 to Tyr-27 traverse the membrane as a helical segment. The stretch at Arg-71–Gly-109 forms a coiled coil. Phosphoserine is present on Ser-121. Positions Pro-122–Leu-131 are enriched in basic residues. The segment at Pro-122–Val-153 is disordered. Position 139 is a phosphothreonine (Thr-139). Phosphotyrosine is present on Tyr-152. Thr-154 and Thr-157 each carry phosphothreonine.

It belongs to the RMDN family. As to quaternary structure, interacts with microtubules.

It is found in the membrane. The protein resides in the cytoplasm. It localises to the cytoskeleton. Its subcellular location is the spindle. The protein localises to the spindle pole. The chain is Regulator of microtubule dynamics protein 2 (RMDN2) from Bos taurus (Bovine).